Reading from the N-terminus, the 317-residue chain is Phosphopantothenate--cysteine ligase 1 (317 aa).

It belongs to the PPC synthetase family. In terms of assembly, homodimer.

The catalysed reaction is (R)-4'-phosphopantothenate + L-cysteine + ATP = N-[(R)-4-phosphopantothenoyl]-L-cysteine + AMP + diphosphate + H(+). Its pathway is cofactor biosynthesis; coenzyme A biosynthesis; CoA from (R)-pantothenate: step 2/5. In terms of biological role, catalyzes the first step in the biosynthesis of coenzyme A from vitamin B5/pantothenate, where cysteine is conjugated to 4'-phosphopantothenate to form 4-phosphopantothenoylcysteine. The catalytic activity is not CTP- but ATP-dependent. This is Phosphopantothenate--cysteine ligase 1 (PPCS1) from Arabidopsis thaliana (Mouse-ear cress).